The chain runs to 652 residues: Zinc finger protein 503 (652 aa).

Polar residues predominate over residues 1 to 11; it reads MSTAPSLSALR. A disordered region spans residues 1–72; that stretch reads MSTAPSLSAL…HAVPPSDPLR (72 aa). Residues 16–32 show a composition bias toward gly residues; the sequence is SGGGGGGGGGGGSGGGS. A Phosphoserine modification is found at S107. Disordered regions lie at residues 126 to 283 and 296 to 338; these read SQIG…GVPA and INVD…SSVL. The span at 135–144 shows a compositional bias: low complexity; that stretch reads PSSKLSSVAS. 2 stretches are compositionally biased toward gly residues: residues 145-157 and 194-209; these read NGGG…NGAG and GGGG…GGGV. N6-acetyllysine is present on K213. The segment covering 221 to 230 has biased composition (polar residues); that stretch reads ATCQPFTPRT. Positions 231-244 are enriched in low complexity; it reads GSPSSSASACSPGG. Phosphoserine occurs at positions 235 and 241. Positions 254–263 are enriched in basic and acidic residues; sequence EGKDDKKDPE. The span at 264 to 283 shows a compositional bias: gly residues; the sequence is AGGGGSSKGSGGASADGVPA. Residues 314 to 336 show a composition bias toward low complexity; the sequence is GSDCGGSSSSSSGSGPSAPTSSS. The C2H2-type zinc finger occupies 520-548; it reads HICNWVSANGPCDKRFATSEELLSHLRTH. R642 carries the omega-N-methylarginine modification.

This sequence belongs to the Elbow/Noc family.

The protein localises to the nucleus. Functionally, may function as a transcriptional repressor. In Mus musculus (Mouse), this protein is Zinc finger protein 503 (Znf503).